A 456-amino-acid polypeptide reads, in one-letter code: tRNA modification GTPase MnmE (456 aa).

R24, E81, and K120 together coordinate (6S)-5-formyl-5,6,7,8-tetrahydrofolate. The 164-residue stretch at 216 to 379 (GMTVVIAGRP…LRDHLKACMG (164 aa)) folds into the TrmE-type G domain. Residue N226 participates in K(+) binding. GTP-binding positions include 226 to 231 (NAGKSS), 245 to 251 (TDIAGTT), 270 to 273 (DTAG), and 335 to 338 (NKAD). Residue S230 participates in Mg(2+) binding. The K(+) site is built by T245, I247, and T250. T251 contacts Mg(2+). K456 contributes to the (6S)-5-formyl-5,6,7,8-tetrahydrofolate binding site.

The protein belongs to the TRAFAC class TrmE-Era-EngA-EngB-Septin-like GTPase superfamily. TrmE GTPase family. As to quaternary structure, homodimer. Heterotetramer of two MnmE and two MnmG subunits. K(+) serves as cofactor.

It localises to the cytoplasm. Its function is as follows. Exhibits a very high intrinsic GTPase hydrolysis rate. Involved in the addition of a carboxymethylaminomethyl (cmnm) group at the wobble position (U34) of certain tRNAs, forming tRNA-cmnm(5)s(2)U34. The protein is tRNA modification GTPase MnmE of Pseudomonas fluorescens (strain ATCC BAA-477 / NRRL B-23932 / Pf-5).